The following is a 361-amino-acid chain: Phosphoserine aminotransferase (361 aa).

R43 provides a ligand contact to L-glutamate. Pyridoxal 5'-phosphate-binding positions include 77-78 (AS), W103, T153, D173, and Q196. K197 is modified (N6-(pyridoxal phosphate)lysine). 238–239 (NT) contributes to the pyridoxal 5'-phosphate binding site.

Belongs to the class-V pyridoxal-phosphate-dependent aminotransferase family. SerC subfamily. As to quaternary structure, homodimer. Requires pyridoxal 5'-phosphate as cofactor.

It localises to the cytoplasm. It carries out the reaction O-phospho-L-serine + 2-oxoglutarate = 3-phosphooxypyruvate + L-glutamate. The catalysed reaction is 4-(phosphooxy)-L-threonine + 2-oxoglutarate = (R)-3-hydroxy-2-oxo-4-phosphooxybutanoate + L-glutamate. The protein operates within amino-acid biosynthesis; L-serine biosynthesis; L-serine from 3-phospho-D-glycerate: step 2/3. It functions in the pathway cofactor biosynthesis; pyridoxine 5'-phosphate biosynthesis; pyridoxine 5'-phosphate from D-erythrose 4-phosphate: step 3/5. In terms of biological role, catalyzes the reversible conversion of 3-phosphohydroxypyruvate to phosphoserine and of 3-hydroxy-2-oxo-4-phosphonooxybutanoate to phosphohydroxythreonine. The chain is Phosphoserine aminotransferase from Ectopseudomonas mendocina (strain ymp) (Pseudomonas mendocina).